Here is a 294-residue protein sequence, read N- to C-terminus: Sperm acrosome membrane-associated protein 1 (294 aa).

The N-terminal stretch at 1–29 (MSPRGTGCSAGLLMTVGWLLLAGLQSARG) is a signal peptide. Residues 30 to 221 (TNVTAAVQDA…LPATDAALIF (192 aa)) lie on the Extracellular side of the membrane. N-linked (GlcNAc...) asparagine glycosylation occurs at asparagine 31. Residues 42–70 (AHEGEGEEETENNDSETAENYAPPETEDV) form a disordered region. Over residues 46-58 (EGEEETENNDSET) the composition is skewed to acidic residues. A helical membrane pass occupies residues 222-242 (VLTIGVIICVFIIFLLIFIII). Topologically, residues 243-294 (NWAAVKAFWGAKASTPEVQSEQSSVRYKDSTSLDQLPTEMPGEDDALSEWNE) are cytoplasmic. Serine 256 is subject to Phosphoserine. Residues 258–267 (PEVQSEQSSV) show a composition bias toward polar residues. Positions 258 to 294 (PEVQSEQSSVRYKDSTSLDQLPTEMPGEDDALSEWNE) are disordered. Tyrosine 269 is subject to Phosphotyrosine. The segment covering 283–294 (PGEDDALSEWNE) has biased composition (acidic residues). Serine 290 carries the phosphoserine modification.

As to quaternary structure, interacts with CYLC1; the interaction may be relevant for proper acrosome attachment to the nuclear envelope. N-glycosylated. As to expression, testis specific.

The protein resides in the cytoplasmic vesicle. Its subcellular location is the secretory vesicle. It localises to the acrosome inner membrane. Plays a role in acrosome formation and establishment of normal sperm morphology during spermatogenesis. Important for male fertility. The chain is Sperm acrosome membrane-associated protein 1 (SPACA1) from Homo sapiens (Human).